Here is a 419-residue protein sequence, read N- to C-terminus: Gamma-glutamyl phosphate reductase (419 aa).

The protein belongs to the gamma-glutamyl phosphate reductase family.

Its subcellular location is the cytoplasm. It catalyses the reaction L-glutamate 5-semialdehyde + phosphate + NADP(+) = L-glutamyl 5-phosphate + NADPH + H(+). It participates in amino-acid biosynthesis; L-proline biosynthesis; L-glutamate 5-semialdehyde from L-glutamate: step 2/2. Catalyzes the NADPH-dependent reduction of L-glutamate 5-phosphate into L-glutamate 5-semialdehyde and phosphate. The product spontaneously undergoes cyclization to form 1-pyrroline-5-carboxylate. The chain is Gamma-glutamyl phosphate reductase from Caldicellulosiruptor bescii (strain ATCC BAA-1888 / DSM 6725 / KCTC 15123 / Z-1320) (Anaerocellum thermophilum).